The primary structure comprises 218 residues: Pyridoxine/pyridoxamine 5'-phosphate oxidase (218 aa).

Substrate contacts are provided by residues 14–17 (RREY) and Lys72. FMN contacts are provided by residues 67-72 (RIVLLK), 82-83 (YT), Arg88, Lys89, and Gln111. Substrate-binding residues include Tyr129, Arg133, and Ser137. Residues 146-147 (QS) and Trp191 each bind FMN. 197–199 (RLH) contributes to the substrate binding site. Arg201 is an FMN binding site.

The protein belongs to the pyridoxamine 5'-phosphate oxidase family. As to quaternary structure, homodimer. FMN serves as cofactor.

It carries out the reaction pyridoxamine 5'-phosphate + O2 + H2O = pyridoxal 5'-phosphate + H2O2 + NH4(+). It catalyses the reaction pyridoxine 5'-phosphate + O2 = pyridoxal 5'-phosphate + H2O2. The protein operates within cofactor metabolism; pyridoxal 5'-phosphate salvage; pyridoxal 5'-phosphate from pyridoxamine 5'-phosphate: step 1/1. It functions in the pathway cofactor metabolism; pyridoxal 5'-phosphate salvage; pyridoxal 5'-phosphate from pyridoxine 5'-phosphate: step 1/1. Functionally, catalyzes the oxidation of either pyridoxine 5'-phosphate (PNP) or pyridoxamine 5'-phosphate (PMP) into pyridoxal 5'-phosphate (PLP). This chain is Pyridoxine/pyridoxamine 5'-phosphate oxidase, found in Escherichia fergusonii (strain ATCC 35469 / DSM 13698 / CCUG 18766 / IAM 14443 / JCM 21226 / LMG 7866 / NBRC 102419 / NCTC 12128 / CDC 0568-73).